The sequence spans 239 residues: Ribosomal RNA small subunit methyltransferase G (239 aa).

S-adenosyl-L-methionine-binding positions include G75, L80, 126 to 127, and R142; that span reads AE.

Belongs to the methyltransferase superfamily. RNA methyltransferase RsmG family.

The protein resides in the cytoplasm. In terms of biological role, specifically methylates the N7 position of guanine in position 518 of 16S rRNA. The protein is Ribosomal RNA small subunit methyltransferase G of Streptomyces coelicolor (strain ATCC BAA-471 / A3(2) / M145).